The sequence spans 431 residues: Tyrosine--tRNA ligase (431 aa).

Tyr-34 is a binding site for L-tyrosine. A 'HIGH' region motif is present at residues Pro-39 to His-48. 2 residues coordinate L-tyrosine: Tyr-171 and Gln-175. Positions Lys-231–Thr-235 match the 'KMSKS' region motif. Lys-234 lines the ATP pocket. Positions Ile-353–Lys-422 constitute an S4 RNA-binding domain.

It belongs to the class-I aminoacyl-tRNA synthetase family. TyrS type 1 subfamily. In terms of assembly, homodimer.

It is found in the cytoplasm. The enzyme catalyses tRNA(Tyr) + L-tyrosine + ATP = L-tyrosyl-tRNA(Tyr) + AMP + diphosphate + H(+). Catalyzes the attachment of tyrosine to tRNA(Tyr) in a two-step reaction: tyrosine is first activated by ATP to form Tyr-AMP and then transferred to the acceptor end of tRNA(Tyr). This is Tyrosine--tRNA ligase from Neisseria gonorrhoeae (strain ATCC 700825 / FA 1090).